Consider the following 422-residue polypeptide: Proline--tRNA ligase (422 aa).

The protein belongs to the class-II aminoacyl-tRNA synthetase family. ProS type 2 subfamily. Homodimer.

The protein localises to the cytoplasm. It catalyses the reaction tRNA(Pro) + L-proline + ATP = L-prolyl-tRNA(Pro) + AMP + diphosphate. Catalyzes the attachment of proline to tRNA(Pro) in a two-step reaction: proline is first activated by ATP to form Pro-AMP and then transferred to the acceptor end of tRNA(Pro). The sequence is that of Proline--tRNA ligase from Wolbachia pipientis wMel.